A 243-amino-acid polypeptide reads, in one-letter code: Probable transcriptional regulatory protein BAV2207 (243 aa).

The disordered stretch occupies residues 1 to 21 (MAGHSKWANIQHRKGRQDAKR).

This sequence belongs to the TACO1 family.

The protein localises to the cytoplasm. The polypeptide is Probable transcriptional regulatory protein BAV2207 (Bordetella avium (strain 197N)).